A 291-amino-acid chain; its full sequence is Nucleotide-binding protein EUBREC_0697 (291 aa).

8 to 15 (GMSGAGKS) contributes to the ATP binding site. 59–62 (DVRN) contacts GTP.

This sequence belongs to the RapZ-like family.

Displays ATPase and GTPase activities. This Agathobacter rectalis (strain ATCC 33656 / DSM 3377 / JCM 17463 / KCTC 5835 / VPI 0990) (Eubacterium rectale) protein is Nucleotide-binding protein EUBREC_0697.